The sequence spans 333 residues: Na(+)/H(+) exchange regulatory cofactor NHE-RF1 (333 aa).

A PDZ 1 domain is found at 13 to 93 (LCCMEKGPDG…AVRLLVVQPQ (81 aa)). 2 disordered regions span residues 90–164 (VQPQ…RAVD) and 232–333 (LAGP…FSNL). Residues 97-111 (QPPKTHSDPDGEAQR) are compositionally biased toward basic and acidic residues. Residues 112 to 122 (EPPAAETPAAE) show a composition bias toward low complexity. Positions 124–133 (SGPEERELRP) are enriched in basic and acidic residues. A PDZ 2 domain is found at 135 to 215 (LCRIKKGPNG…ETKLLVVGVL (81 aa)). Composition is skewed to basic and acidic residues over residues 274-289 (SETHSEPDTQEGDKRS) and 323-333 (WSKKNELFSNL).

Its subcellular location is the endomembrane system. The protein resides in the cell projection. It is found in the filopodium. It localises to the ruffle. The protein localises to the microvillus. In terms of biological role, scaffold protein that connects plasma membrane proteins with members of the ezrin/moesin/radixin family and thereby helps to link them to the actin cytoskeleton and to regulate their surface expression. Was first known to play a role in the regulation of the activity and subcellular location of SLC9A3. May enhance Wnt signaling. The polypeptide is Na(+)/H(+) exchange regulatory cofactor NHE-RF1 (NHERF1) (Gallus gallus (Chicken)).